Consider the following 25-residue polypeptide: Antimicrobial peptide 2 (25 aa).

Expressed by the skin glands.

Its subcellular location is the secreted. Its function is as follows. Has very strong antibacterial activity against Gram-positive bacterium S.aureus and very weak activity against Gram-negative bacterium E.coli. The polypeptide is Antimicrobial peptide 2 (Xenopus tropicalis (Western clawed frog)).